The primary structure comprises 149 residues: Arginine repressor (149 aa).

The protein belongs to the ArgR family.

It localises to the cytoplasm. Its pathway is amino-acid biosynthesis; L-arginine biosynthesis [regulation]. Its function is as follows. Regulates arginine biosynthesis genes. This Exiguobacterium sibiricum (strain DSM 17290 / CCUG 55495 / CIP 109462 / JCM 13490 / 255-15) protein is Arginine repressor.